The sequence spans 244 residues: Carboxy-S-adenosyl-L-methionine synthase (244 aa).

Residues Y41, 66 to 68, 91 to 92, 119 to 120, N134, and R201 each bind S-adenosyl-L-methionine; these read GCS, DN, and DI.

Belongs to the class I-like SAM-binding methyltransferase superfamily. Cx-SAM synthase family. Homodimer.

The catalysed reaction is prephenate + S-adenosyl-L-methionine = carboxy-S-adenosyl-L-methionine + 3-phenylpyruvate + H2O. Catalyzes the conversion of S-adenosyl-L-methionine (SAM) to carboxy-S-adenosyl-L-methionine (Cx-SAM). The polypeptide is Carboxy-S-adenosyl-L-methionine synthase (Photobacterium profundum (strain SS9)).